Consider the following 308-residue polypeptide: Sulfate adenylyltransferase subunit 2 (308 aa).

The tract at residues 286-308 (RQGRIIDHDGSASMEKKKQEGYF) is disordered.

It belongs to the PAPS reductase family. CysD subfamily. Heterodimer composed of CysD, the smaller subunit, and CysN.

The catalysed reaction is sulfate + ATP + H(+) = adenosine 5'-phosphosulfate + diphosphate. The protein operates within sulfur metabolism; hydrogen sulfide biosynthesis; sulfite from sulfate: step 1/3. In terms of biological role, with CysN forms the ATP sulfurylase (ATPS) that catalyzes the adenylation of sulfate producing adenosine 5'-phosphosulfate (APS) and diphosphate, the first enzymatic step in sulfur assimilation pathway. APS synthesis involves the formation of a high-energy phosphoric-sulfuric acid anhydride bond driven by GTP hydrolysis by CysN coupled to ATP hydrolysis by CysD. The chain is Sulfate adenylyltransferase subunit 2 from Nocardia farcinica (strain IFM 10152).